A 318-amino-acid polypeptide reads, in one-letter code: Methionyl-tRNA formyltransferase (318 aa).

112–115 (SILP) provides a ligand contact to (6S)-5,6,7,8-tetrahydrofolate.

The protein belongs to the Fmt family.

The enzyme catalyses L-methionyl-tRNA(fMet) + (6R)-10-formyltetrahydrofolate = N-formyl-L-methionyl-tRNA(fMet) + (6S)-5,6,7,8-tetrahydrofolate + H(+). Attaches a formyl group to the free amino group of methionyl-tRNA(fMet). The formyl group appears to play a dual role in the initiator identity of N-formylmethionyl-tRNA by promoting its recognition by IF2 and preventing the misappropriation of this tRNA by the elongation apparatus. In Shewanella frigidimarina (strain NCIMB 400), this protein is Methionyl-tRNA formyltransferase.